The following is a 272-amino-acid chain: Indole-3-glycerol phosphate synthase (272 aa).

Belongs to the TrpC family.

It carries out the reaction 1-(2-carboxyphenylamino)-1-deoxy-D-ribulose 5-phosphate + H(+) = (1S,2R)-1-C-(indol-3-yl)glycerol 3-phosphate + CO2 + H2O. It functions in the pathway amino-acid biosynthesis; L-tryptophan biosynthesis; L-tryptophan from chorismate: step 4/5. This is Indole-3-glycerol phosphate synthase from Mycolicibacterium paratuberculosis (strain ATCC BAA-968 / K-10) (Mycobacterium paratuberculosis).